Consider the following 1426-residue polypeptide: Phospholipid-transporting ATPase VD (1426 aa).

Residues 1 to 97 (MTEALQWARY…PRNLFEQFHR (97 aa)) lie on the Cytoplasmic side of the membrane. Residues 98–118 (AANLYFLFLVVLNWVPLVEAF) form a helical membrane-spanning segment. The Exoplasmic loop segment spans residues 119–121 (QKE). Residues 122–142 (ITMLPLVVVLTIIAIKDGLED) form a helical membrane-spanning segment. At 143–321 (YRKYKIDKQI…SKLERRANTD (179 aa)) the chain is on the cytoplasmic side. Residues 322 to 342 (VLWCVMLLVIMCLTGAVGHGI) form a helical membrane-spanning segment. At 343–365 (WLSRYEKMHFFNVPEPDGHIISP) the chain is on the exoplasmic loop side. A helical transmembrane segment spans residues 366 to 386 (LLAGFYMFWTMIILLQVLIPI). Over 387 to 1113 (SLYVSIEIVK…HWCYTRLSNM (727 aa)) the chain is Cytoplasmic. Catalysis depends on aspartate 438, which acts as the 4-aspartylphosphate intermediate. Residues aspartate 438, lysine 439, and threonine 440 each coordinate ATP. Aspartate 438 is a Mg(2+) binding site. Threonine 440 serves as a coordination point for Mg(2+). Residues 506-531 (NGPLGNKPSNHLAGSSFTLGSGEGAS) form a disordered region. A compositionally biased stretch (polar residues) spans 512–524 (KPSNHLAGSSFTL). Residues glutamate 730, phenylalanine 772, lysine 796, arginine 840, threonine 920, glycine 921, aspartate 922, 996–1003 (GLIITGKT), arginine 1030, and lysine 1036 contribute to the ATP site. Aspartate 1056 serves as a coordination point for Mg(2+). ATP-binding residues include asparagine 1059 and aspartate 1060. Residue aspartate 1060 participates in Mg(2+) binding. Residues 1114-1134 (ILYFFYKNVAYVNLLFWYQFF) traverse the membrane as a helical segment. The Exoplasmic loop portion of the chain corresponds to 1135-1145 (CGFSGTSMTDY). The chain crosses the membrane as a helical span at residues 1146–1166 (WVLIFFNLLFTSAPPVIYGVL). Residues 1167 to 1195 (EKDVSAETLMQLPELYRSGQKSEAYLPHT) are Cytoplasmic-facing. A helical membrane pass occupies residues 1196-1216 (FWITLLDAFYQSLVCFFVPYF). The Exoplasmic loop portion of the chain corresponds to 1217–1224 (TYQGSDTD). Residues 1225 to 1245 (IFAFGNPLNTAALFIVLLHLV) form a helical membrane-spanning segment. The Cytoplasmic segment spans residues 1246–1252 (IESKSLT). Residues 1253–1273 (WIHLLVIIGSILSYFLFAIVF) traverse the membrane as a helical segment. Over 1274 to 1292 (GAMCVTCNPPSNPYWIMQE) the chain is Exoplasmic loop. A helical transmembrane segment spans residues 1293-1313 (HMLDPVFYLVCILTTSIALLP). Residues 1314–1426 (RFVYRVLQGS…MAGPSKGKES (113 aa)) lie on the Cytoplasmic side of the membrane. 1364–1371 (ANQSAGKS) is an ATP binding site.

Belongs to the cation transport ATPase (P-type) (TC 3.A.3) family. Type IV subfamily. As to quaternary structure, component of a P4-ATPase flippase complex which consists of a catalytic alpha subunit ATP10A and an accessory beta subunit TMEM30A. Mg(2+) serves as cofactor. In terms of processing, autophosphorylated at the conserved aspartate of the P-type ATPase signature sequence. Expressed in placenta and, to a lesser extent, in kidney.

The protein resides in the cell membrane. It is found in the endoplasmic reticulum membrane. It catalyses the reaction ATP + H2O + phospholipidSide 1 = ADP + phosphate + phospholipidSide 2.. The catalysed reaction is a beta-D-glucosyl-(1&lt;-&gt;1')-N-acylsphing-4-enine(out) + ATP + H2O = a beta-D-glucosyl-(1&lt;-&gt;1')-N-acylsphing-4-enine(in) + ADP + phosphate + H(+). Functionally, catalytic component of a P4-ATPase flippase complex, which catalyzes the hydrolysis of ATP coupled to the transport of glucosylceramide (GlcCer) from the outer to the inner leaflet of the plasma membrane. This is Phospholipid-transporting ATPase VD from Homo sapiens (Human).